Here is a 425-residue protein sequence, read N- to C-terminus: Glucan 1,3-beta-glucosidase (425 aa).

Positions M1–A17 are cleaved as a signal peptide. Catalysis depends on E214, which acts as the Proton donor. Intrachain disulfides connect C301–C423 and C326–C352. K328 serves as the catalytic Nucleophile.

The protein belongs to the glycosyl hydrolase 5 (cellulase A) family.

It localises to the secreted. It carries out the reaction Successive hydrolysis of beta-D-glucose units from the non-reducing ends of (1-&gt;3)-beta-D-glucans, releasing alpha-glucose.. Beta-glucanases participate in the metabolism of beta-glucan, the main structural component of the cell wall. It could also function biosynthetically as a transglycosylase. This is Glucan 1,3-beta-glucosidase (EXG1) from Candida oleophila (Yeast).